The sequence spans 247 residues: ATP synthase subunit a, chloroplastic (247 aa).

A run of 5 helical transmembrane segments spans residues 38-58 (QVLI…TIAV), 95-115 (VPFI…GALL), 134-154 (INTT…AGLT), 199-219 (LVVV…VMLL), and 220-240 (GLFT…AYIG).

This sequence belongs to the ATPase A chain family. As to quaternary structure, F-type ATPases have 2 components, CF(1) - the catalytic core - and CF(0) - the membrane proton channel. CF(1) has five subunits: alpha(3), beta(3), gamma(1), delta(1), epsilon(1). CF(0) has four main subunits: a, b, b' and c.

The protein localises to the plastid. It is found in the chloroplast thylakoid membrane. Key component of the proton channel; it plays a direct role in the translocation of protons across the membrane. The sequence is that of ATP synthase subunit a, chloroplastic from Solanum lycopersicum (Tomato).